The chain runs to 1573 residues: Soluble scavenger receptor cysteine-rich domain-containing protein SSC5D (1573 aa).

Positions 1–16 (MRVLACLLAALVGIQA) are cleaved as a signal peptide. Residues 20–120 (LRLADGPHGC…HEEDAGVVCA (101 aa)) form the SRCR 1 domain. 3 disulfide bridges follow: C45-C109, C58-C119, and C89-C99. Positions 153–192 (EPLVTHAPRPAGNPQNASRKKSPRPKQAKSTRAPLLTTGA) are disordered. A glycan (N-linked (GlcNAc...) asparagine) is linked at N168. Residues 170–181 (SRKKSPRPKQAK) are compositionally biased toward basic residues. 2 SRCR domains span residues 198–298 (LRLV…LVCT) and 304–404 (LRLA…AVCD). Disulfide bonds link C223-C287, C236-C297, C267-C277, C329-C393, C342-C403, and C373-C383. N-linked (GlcNAc...) asparagine glycosylation is found at N376 and N420. Positions 412–465 (PPTAPTDSNNSTPREAASRPPSTMTSQAPGTAGVSPPPASPTVLWEPGPEAGSP) are disordered. Residues 431–440 (PPSTMTSQAP) show a composition bias toward polar residues. One can recognise an SRCR 4 domain in the interval 467–568 (LRLVAGPSKC…HNEDVGVTCT (102 aa)). Intrachain disulfides connect C492/C557, C505/C567, and C537/C547. The tract at residues 614–769 (EKTTTKAPGK…SVSTTGESGL (156 aa)) is disordered. Positions 626–637 (KSTKKWVTKNAK) are enriched in basic residues. Over residues 654 to 671 (AQSPPDLTSQTTAALTTE) the composition is skewed to polar residues. The segment covering 672–685 (ASRRPTSEFTRRPT) has biased composition (basic and acidic residues). Composition is skewed to polar residues over residues 687–702 (EAPQ…TLTP) and 711–735 (KTMA…SIPQ). In terms of domain architecture, SRCR 5 spans 772–872 (VRLADGPNRC…HEEDVGLTCT (101 aa)). Disulfide bonds link C797–C861, C810–C871, and C841–C851. Disordered regions lie at residues 895–1475 (KGTT…PCVA) and 1554–1573 (MPAP…RGDV). Basic and acidic residues predominate over residues 924–934 (RLPDTGSKDGY). Pro residues-rich tracts occupy residues 1004 to 1020 (PPTP…PPGP) and 1083 to 1093 (TPEPSPTPLPT). Positions 1101–1140 (DPSTPSEVTSLSPTSEQVPESDTTPDLDTTPYSSTVSEYS) are enriched in polar residues. Positions 1144 to 1160 (DPSPSPHPTTTPDPTMA) are enriched in pro residues. Low complexity-rich tracts occupy residues 1161 to 1175 (PDPI…TPHF) and 1185 to 1277 (PHPT…MPHP). The segment covering 1278–1328 (TTTPHPTTTPHPTTTPHPTTTPHPTMTPDPTTTPYPTTTPDPTTTPHPTTP) has biased composition (pro residues). Polar residues-rich tracts occupy residues 1335 to 1354 (VITT…SPTL) and 1364 to 1380 (PQLT…TSQI). Positions 1381–1401 (PTLEPSPALESSPSRSSTATS) are enriched in low complexity. The segment covering 1464-1475 (GQSPGPHGPCVA) has biased composition (pro residues).

As to quaternary structure, interacts with LGALS1 and laminin. As to expression, highly expressed in monocytes/macrophages and T-lymphocytes. Highly expressed in placenta and spleen, and also detected at lower levels in colon, and more weakly in lung, heart and kidney.

It localises to the secreted. It is found in the cytoplasm. Its function is as follows. Binds to extracellular matrix proteins. Binds to pathogen-associated molecular patterns (PAMPs) present on the cell walls of Gram-positive and Gram-negative bacteria and fungi, behaving as a pattern recognition receptor (PRR). Induces bacterial and fungal aggregation and subsequent inhibition of PAMP-induced cytokine release. Does not possess intrinsic bactericidal activity. May play a role in the innate defense and homeostasis of certain epithelial surfaces. The protein is Soluble scavenger receptor cysteine-rich domain-containing protein SSC5D (SSC5D) of Homo sapiens (Human).